The sequence spans 362 residues: Peptide chain release factor 1 (362 aa).

Residue glutamine 235 is modified to N5-methylglutamine.

Belongs to the prokaryotic/mitochondrial release factor family. In terms of processing, methylated by PrmC. Methylation increases the termination efficiency of RF1.

It localises to the cytoplasm. In terms of biological role, peptide chain release factor 1 directs the termination of translation in response to the peptide chain termination codons UAG and UAA. This Acinetobacter baumannii (strain ACICU) protein is Peptide chain release factor 1.